A 241-amino-acid chain; its full sequence is Zinc finger CCHC domain-containing protein 24 (241 aa).

Ser-65 and Ser-93 each carry phosphoserine. The segment at 132 to 149 (YLCHLCFNKGHYIKDCPQ) adopts a CCHC-type zinc-finger fold.

The chain is Zinc finger CCHC domain-containing protein 24 (ZCCHC24) from Homo sapiens (Human).